The chain runs to 48 residues: uncharacterized protein (48 aa).

It is found in the plastid. Its subcellular location is the cyanelle. This is an uncharacterized protein from Cyanophora paradoxa.